A 1225-amino-acid polypeptide reads, in one-letter code: Clustered mitochondria protein homolog (1225 aa).

A disordered region spans residues 1–22 (MAQTNGEMEHSKESPEQITNGN). The 252-residue stretch at 281–532 (QESNNQKDLL…RVTPLDVAWN (252 aa)) folds into the Clu domain. Disordered regions lie at residues 577 to 605 (EEAA…EALD) and 846 to 878 (ANGV…SAAA). 3 TPR repeats span residues 949–982 (AKLY…TERT), 991–1024 (ILSY…WKII), and 1033–1066 (ITTM…CESL). The segment covering 1153 to 1184 (RTTLGTQIQPQVGQSTADVSAPSQASNSSIDS) has biased composition (polar residues). The disordered stretch occupies residues 1153-1225 (RTTLGTQIQP…KLRGSKKSSA (73 aa)).

Belongs to the CLU family. May associate with the eukaryotic translation initiation factor 3 (eIF-3) complex.

The protein resides in the cytoplasm. MRNA-binding protein involved in proper cytoplasmic distribution of mitochondria. The protein is Clustered mitochondria protein homolog of Emericella nidulans (strain FGSC A4 / ATCC 38163 / CBS 112.46 / NRRL 194 / M139) (Aspergillus nidulans).